The following is a 198-amino-acid chain: uncharacterized protein (198 aa).

Positions 20–58 form a coiled coil; it reads ERVRRDEELARLSADKEQAKNDLEESKRRIARLRGTVYE. The disordered stretch occupies residues 144–198; the sequence is LSNRKTKNPESDRRRQSRKKKSTQIQASDEMKHRRHHVHKVHHYSQKQSSSTTRR. Residues 176-188 are compositionally biased toward basic residues; that stretch reads HRRHHVHKVHHYS. Over residues 189 to 198 the composition is skewed to polar residues; that stretch reads QKQSSSTTRR.

Its subcellular location is the nucleus. It is found in the nucleolus. This is an uncharacterized protein from Schizosaccharomyces pombe (strain 972 / ATCC 24843) (Fission yeast).